The following is a 173-amino-acid chain: Probable lipoprotein EnvE (173 aa).

A signal peptide spans 1-20; it reads MTLLSGKTTLVLCLSSILCG. Cys21 is lipidated: N-palmitoyl cysteine. Residue Cys21 is the site of S-diacylglycerol cysteine attachment.

Its subcellular location is the cell membrane. The chain is Probable lipoprotein EnvE (envE) from Salmonella typhimurium (strain LT2 / SGSC1412 / ATCC 700720).